Here is a 313-residue protein sequence, read N- to C-terminus: Serine/threonine-protein kinase SZE1 (313 aa).

The N-myristoyl glycine moiety is linked to residue glycine 2. The Protein kinase domain occupies 43–311; sequence MELGESLGYI…EVLDNLNAIA (269 aa). Residues 49-57 and lysine 71 each bind ATP; that span reads LGYINPKTL.

The protein belongs to the protein kinase superfamily. Ser/Thr protein kinase family. In terms of assembly, component of an immune signaling complex made of, at least, SZE1, BKN2/SZE2, ZAR1 and ZED1. Interacts directly with ZED1, ZAR1 and Pseudomonas syringae HOPZ1A at the plasma membrane. In terms of processing, N-terminal myristoylation is critical for plasma membrane localization and implication in defense responses. Autophosphorylated. Expressed in roots, seedlings, rosette leaves, floral organs, siliques and inflorescence stems.

It localises to the cell membrane. It carries out the reaction L-seryl-[protein] + ATP = O-phospho-L-seryl-[protein] + ADP + H(+). The catalysed reaction is L-threonyl-[protein] + ATP = O-phospho-L-threonyl-[protein] + ADP + H(+). Functionally, together with BKN2/SZE2 and ZED1, required for effector-triggered immunity (e.g. Pseudomonas syringae effector type III HopZ1a) via the activation of ZAR1, thus being essential for resistance against P.syringae pv. tomato DC3000 expressing HopZ1a. This chain is Serine/threonine-protein kinase SZE1, found in Arabidopsis thaliana (Mouse-ear cress).